We begin with the raw amino-acid sequence, 569 residues long: Protein angel homolog 2 (569 aa).

3 disordered regions span residues 1 to 22, 63 to 92, and 109 to 155; these read MRKG…GVSP, LQHP…WSSW, and GLME…WLRN. Residues 63-72 are compositionally biased toward polar residues; that stretch reads LQHPSSSFST. Residues 139 to 150 are compositionally biased toward low complexity; sequence PPKGSRSPKGSP.

The protein belongs to the CCR4/nocturin family.

The polypeptide is Protein angel homolog 2 (angel2) (Danio rerio (Zebrafish)).